A 355-amino-acid polypeptide reads, in one-letter code: Zinc transporter ZIP13 homolog (355 aa).

N4 carries N-linked (GlcNAc...) asparagine glycosylation. 3 helical membrane passes run 37 to 57 (VFSL…LIII), 79 to 99 (VLLS…LLPE), and 118 to 138 (LWVL…SGYA). An N-linked (GlcNAc...) asparagine glycan is attached at N218. Helical transmembrane passes span 273 to 293 (LLTA…SGVT) and 301 to 321 (SWIM…TVLP).

Belongs to the ZIP transporter (TC 2.A.5) family. KE4/Catsup subfamily.

It is found in the basolateral cell membrane. Its subcellular location is the golgi apparatus membrane. In terms of biological role, involved in zinc transport and homeostasis. The protein is Zinc transporter ZIP13 homolog (Zip99C) of Drosophila melanogaster (Fruit fly).